We begin with the raw amino-acid sequence, 266 residues long: MASVASSTTLISSPSSRVFPAKSSLSSPSVSFLRTLSSPSASASLRSGFARRSSLSSTSRRSFAVKAQADDLPLVGNKAPDFEAEAVFDQEFIKVKLSDYIGKKYVILFFYPLDFTFVCPTEITAFSDRHSEFEKLNTEVLGVSVDSVFSHLAWVQTDRKSGGLGDLNYPLISDVTKSISKSFGVLIHDQGIALRGLFIIDKEGVIQHSTINNLGIGRSVDETMRTLQALQYIQENPDEVCPAGWKPGEKSMKPDPKLSKEYFSAI.

Residues 1-16 (MASVASSTTLISSPSS) show a composition bias toward low complexity. Positions 1 to 25 (MASVASSTTLISSPSSRVFPAKSSL) are disordered. Residues 1-65 (MASVASSTTL…SSTSRRSFAV (65 aa)) constitute a chloroplast transit peptide. The Thioredoxin domain maps to 73–232 (PLVGNKAPDF…TMRTLQALQY (160 aa)). Cys-119 serves as the catalytic Cysteine sulfenic acid (-SOH) intermediate.

The protein belongs to the peroxiredoxin family. AhpC/Prx1 subfamily. In terms of assembly, homodimer; disulfide-linked, upon oxidation. Interacts with the plastidial thioredoxin CDSP32. Interacts with the plastidial NADPH-dependent thioredoxin reductase ANTR-C.

Its subcellular location is the plastid. It is found in the chloroplast. It carries out the reaction a hydroperoxide + [thioredoxin]-dithiol = an alcohol + [thioredoxin]-disulfide + H2O. Its function is as follows. Thiol-specific peroxidase that catalyzes the reduction of hydrogen peroxide and organic hydroperoxides to water and alcohols, respectively. Plays a role in cell protection against oxidative stress by detoxifying peroxides. May be an antioxidant enzyme particularly in the developing shoot and photosynthesizing leaf. This is 2-Cys peroxiredoxin BAS1, chloroplastic (BAS1) from Arabidopsis thaliana (Mouse-ear cress).